Reading from the N-terminus, the 281-residue chain is Elongation factor Ts (281 aa).

Residues 80 to 83 (TDFV) form an involved in Mg(2+) ion dislocation from EF-Tu region.

The protein belongs to the EF-Ts family.

The protein resides in the cytoplasm. Functionally, associates with the EF-Tu.GDP complex and induces the exchange of GDP to GTP. It remains bound to the aminoacyl-tRNA.EF-Tu.GTP complex up to the GTP hydrolysis stage on the ribosome. The polypeptide is Elongation factor Ts (Vibrio campbellii (strain ATCC BAA-1116)).